The chain runs to 232 residues: Putative uridine kinase DAS2 (232 aa).

ATP is bound at residue 17 to 24 (GGHATGVG).

This sequence belongs to the uridine kinase family.

It is found in the cytoplasm. Its subcellular location is the nucleus. It catalyses the reaction uridine + ATP = UMP + ADP + H(+). It carries out the reaction cytidine + ATP = CMP + ADP + H(+). It participates in pyrimidine metabolism; CTP biosynthesis via salvage pathway; CTP from cytidine: step 1/3. It functions in the pathway pyrimidine metabolism; UMP biosynthesis via salvage pathway; UMP from uridine: step 1/1. Its function is as follows. Putative uridine kinase identified in a screen for mutants with increased levels of rDNA transcription. This is Putative uridine kinase DAS2 (DAS2) from Saccharomyces cerevisiae (strain ATCC 204508 / S288c) (Baker's yeast).